The following is a 548-amino-acid chain: MEEDLFQLRQLPVVKFRRTGESARSEDDAASGEHDVQIEGVRVGLEAVELDDGAAVPKEFANPTDDTFMVEDAVEAIGFGRFQWKLSVLTGLAWMADAMEMMILSILAPQLHCEWRLPSWQVALLTSVVFIGMMSSSTLWGNISDQYGRKTGLKISVFWTLYYGILSAFAPVYSWILVLRGLVGFGIGGVPQSVTLYAEFLPMKARAKCILLIEVFWAIGTVFEVLLAVFVMPSLGWRWLLLLSAAPLLVFAVLCFWLPESARYDVLSGNQEKAIATLKRIATENGAPMPLGKLIISRQEDRGKMRDLFTPHFRWTTLLLWFIWFSNAFSYYGLVLLTTELFQAGDVCSISSRKKAVEAKCSLACEYLSKEDYMDLLWTTLSEFPGVLVTLWVIDRLGRKKTMALCFVIFSLCSLLLFICIGRNVLTLLLFIARAFISGGFQAAYVYTPEVYPTATRALGLGTCSGMARVGALITPFIAQVMLESSVYLTLAVYSGCCLLAALASCFLPIETKGRALQESSHREWGQEMVGRGTNSTGVPRSNSGSQE.

Residues 1–87 (MEEDLFQLRQ…GFGRFQWKLS (87 aa)) are Cytoplasmic-facing. Serine 25 and serine 31 each carry phosphoserine. Residues 88 to 108 (VLTGLAWMADAMEMMILSILA) form a helical membrane-spanning segment. The Vesicular segment spans residues 109–122 (PQLHCEWRLPSWQV). The helical transmembrane segment at 123-143 (ALLTSVVFIGMMSSSTLWGNI) threads the bilayer. At 144–156 (SDQYGRKTGLKIS) the chain is on the cytoplasmic side. A helical transmembrane segment spans residues 157 to 177 (VFWTLYYGILSAFAPVYSWIL). At 178–180 (VLR) the chain is on the vesicular side. The chain crosses the membrane as a helical span at residues 181 to 201 (GLVGFGIGGVPQSVTLYAEFL). Over 202-209 (PMKARAKC) the chain is Cytoplasmic. A helical membrane pass occupies residues 210–230 (ILLIEVFWAIGTVFEVLLAVF). The Vesicular segment spans residues 231–238 (VMPSLGWR). Residues 239–259 (WLLLLSAAPLLVFAVLCFWLP) form a helical membrane-spanning segment. At 260 to 316 (ESARYDVLSGNQEKAIATLKRIATENGAPMPLGKLIISRQEDRGKMRDLFTPHFRWT) the chain is on the cytoplasmic side. Residues 317-337 (TLLLWFIWFSNAFSYYGLVLL) form a helical membrane-spanning segment. At 338 to 373 (TTELFQAGDVCSISSRKKAVEAKCSLACEYLSKEDY) the chain is on the vesicular side. Residues 374 to 394 (MDLLWTTLSEFPGVLVTLWVI) form a helical membrane-spanning segment. Residues 395–401 (DRLGRKK) lie on the Cytoplasmic side of the membrane. A helical membrane pass occupies residues 402–422 (TMALCFVIFSLCSLLLFICIG). The Vesicular segment spans residues 423-424 (RN). The chain crosses the membrane as a helical span at residues 425-445 (VLTLLLFIARAFISGGFQAAY). Topologically, residues 446-457 (VYTPEVYPTATR) are cytoplasmic. A helical transmembrane segment spans residues 458 to 478 (ALGLGTCSGMARVGALITPFI). The Vesicular segment spans residues 479–489 (AQVMLESSVYL). Residues 490–510 (TLAVYSGCCLLAALASCFLPI) traverse the membrane as a helical segment. At 511–548 (ETKGRALQESSHREWGQEMVGRGTNSTGVPRSNSGSQE) the chain is on the cytoplasmic side. The tract at residues 523–548 (REWGQEMVGRGTNSTGVPRSNSGSQE) is disordered. Over residues 533–548 (GTNSTGVPRSNSGSQE) the composition is skewed to polar residues. A Phosphoserine modification is found at serine 542.

Belongs to the major facilitator superfamily. As to expression, detected in brain (at protein level). Detected in brain, in synaptic layers of the cerebellum, hippocampus and cerebral cortex.

Its subcellular location is the cytoplasmic vesicle. It is found in the secretory vesicle. The protein localises to the synaptic vesicle membrane. The chain is Synaptic vesicle 2-related protein (Svop) from Rattus norvegicus (Rat).